We begin with the raw amino-acid sequence, 1194 residues long: Multidrug efflux ATP-binding/permease protein BCG_0231 (1194 aa).

Transmembrane regions (helical) follow at residues 20-40, 56-76, 130-150, 153-173, 258-278, and 279-299; these read LLLGFGAALAGTVIAVLVPLV, LAPWAVVLVAAAGATYLLTYV, LLFDVPNVLRHVLTLLLGVAV, WLSVPLALLAVLLVPVIGLIA, FALGGWMAAQGSITVGTFVAF, and WACLTLLARPACDLAGMLTIA. The ABC transmembrane type-1 1 domain maps to 21–301; it reads LLGFGAALAG…LAGMLTIAQQ (281 aa). Residues 334-568 enclose the ABC transporter 1 domain; sequence LEFQRVSFGY…CPRYRELLSP (235 aa). 367–374 contacts ATP; it reads GAPGSGKS. 6 helical membrane-spanning segments follow: residues 628 to 648, 660 to 680, 743 to 763, 765 to 785, 847 to 867, and 878 to 898; these read ALSLLLVAVQTCAGLLPPLLI, VLSALWWAALAGTATVVIRWV, LVVAVISVVTLVGILVALLAI, ARLVLLIFTTMPVLALATWQF, LLALYYPFVALLCSLATTLVL, and VISVGALVTYLLYIELLYTPI. Positions 628–910 constitute an ABC transmembrane type-1 2 domain; the sequence is ALSLLLVAVQ…LAQMFDDYQR (283 aa). Residues 942–1177 enclose the ABC transporter 2 domain; sequence VVFDAVHYSY…GGHYSRLWAA (236 aa). Residue 976–983 participates in ATP binding; it reads GSTGSGKS.

This sequence belongs to the ABC transporter superfamily. Lipid exporter (TC 3.A.1.106) family.

The protein resides in the cell inner membrane. Its function is as follows. Overexpression increases resistance to chloramphenicol, ampicillin, streptomycin, tetracyclin and vancomycin. This chain is Multidrug efflux ATP-binding/permease protein BCG_0231, found in Mycobacterium bovis (strain BCG / Pasteur 1173P2).